We begin with the raw amino-acid sequence, 282 residues long: Bifunctional protein FolD (282 aa).

Residues 165–167, Ser-190, and Thr-231 each bind NADP(+); that span reads GRS.

Belongs to the tetrahydrofolate dehydrogenase/cyclohydrolase family. As to quaternary structure, homodimer.

It catalyses the reaction (6R)-5,10-methylene-5,6,7,8-tetrahydrofolate + NADP(+) = (6R)-5,10-methenyltetrahydrofolate + NADPH. It carries out the reaction (6R)-5,10-methenyltetrahydrofolate + H2O = (6R)-10-formyltetrahydrofolate + H(+). Its pathway is one-carbon metabolism; tetrahydrofolate interconversion. Catalyzes the oxidation of 5,10-methylenetetrahydrofolate to 5,10-methenyltetrahydrofolate and then the hydrolysis of 5,10-methenyltetrahydrofolate to 10-formyltetrahydrofolate. This chain is Bifunctional protein FolD, found in Clostridium beijerinckii (strain ATCC 51743 / NCIMB 8052) (Clostridium acetobutylicum).